The chain runs to 460 residues: Probable fibrosin-1 (460 aa).

Lys8 is covalently cross-linked (Glycyl lysine isopeptide (Lys-Gly) (interchain with G-Cter in SUMO2)). Disordered stretches follow at residues 40–79 (SLQGAFQPKSTNPELPPRLGPVPSGLSQKGTQIPDHFRPP), 205–311 (FAQK…KEEA), and 406–460 (YSRL…RADR). The span at 212–223 (GAPPAFASPPDP) shows a compositional bias: pro residues. An asymmetric dimethylarginine mark is found at Arg229 and Arg239. Positions 248-272 (GSDKERPVERREPSITKEEKDRDLP) are enriched in basic and acidic residues. Position 281 is a phosphoserine (Ser281). Over residues 288–311 (RAGEEGPRPTKESVRVKEERKEEA) the composition is skewed to basic and acidic residues. Positions 436–453 (APPPLVPAPRPSSPPRGP) are enriched in pro residues.

The protein is Probable fibrosin-1 (FBRS) of Homo sapiens (Human).